The following is an 84-amino-acid chain: M-myrmeciitoxin-Mb2a (84 aa).

The signal sequence occupies residues 1–21; sequence MKLSCLLLTLAIIFVLTIVHA. The propeptide occupies 22–48; sequence PNVKAKALADPESDAVGFADAVGEADP.

This sequence belongs to the formicidae venom precursor-01 superfamily. Ant pilosulin family. As to expression, expressed by the venom gland.

Its subcellular location is the secreted. Functionally, shows activity against E.coli and S.aureus (MIC&lt;6.25 uM), moderate activity against P.aeruginosa (MIC&lt;25 uM), weak activity against B.subtilis (MIC&lt;50 uM), and has no effect against L.garvieae, C.albicans, and S.cerevisiae. Has no hemolytic nor cytolytic activity. Causes an IgE-independent histamine release. This Myrmecia banksi (Jack jumper ant) protein is M-myrmeciitoxin-Mb2a.